The following is a 322-amino-acid chain: Cysteine synthase (322 aa).

Residues Asn8 and Arg35 each contribute to the hydrogen sulfide site. Lys42 is subject to N6-(pyridoxal phosphate)lysine. Residues Asn72 and 177–181 each bind pyridoxal 5'-phosphate; that span reads GTGGT. Leu269 provides a ligand contact to hydrogen sulfide. Residue Ser273 coordinates pyridoxal 5'-phosphate.

It belongs to the cysteine synthase/cystathionine beta-synthase family. Homodimer. The cofactor is pyridoxal 5'-phosphate.

The enzyme catalyses O-acetyl-L-serine + hydrogen sulfide = L-cysteine + acetate. Its pathway is amino-acid biosynthesis; L-cysteine biosynthesis; L-cysteine from L-serine: step 2/2. The protein is Cysteine synthase (cysK) of Buchnera aphidicola subsp. Schizaphis graminum (strain Sg).